A 300-amino-acid polypeptide reads, in one-letter code: Homoserine kinase (300 aa).

Residue 86 to 96 (PVARGLGSSAT) coordinates ATP.

It belongs to the GHMP kinase family. Homoserine kinase subfamily.

The protein resides in the cytoplasm. The enzyme catalyses L-homoserine + ATP = O-phospho-L-homoserine + ADP + H(+). The protein operates within amino-acid biosynthesis; L-threonine biosynthesis; L-threonine from L-aspartate: step 4/5. Functionally, catalyzes the ATP-dependent phosphorylation of L-homoserine to L-homoserine phosphate. The chain is Homoserine kinase from Persephonella marina (strain DSM 14350 / EX-H1).